Consider the following 251-residue polypeptide: Adenosine 5'-phosphosulfate reductase (251 aa).

The [4Fe-4S] cluster site is built by Cys121, Cys122, Cys204, and Cys207. Cys232 functions as the Nucleophile; cysteine thiosulfonate intermediate in the catalytic mechanism.

It belongs to the PAPS reductase family. CysH subfamily. Requires [4Fe-4S] cluster as cofactor.

The protein resides in the cytoplasm. It carries out the reaction [thioredoxin]-disulfide + sulfite + AMP + 2 H(+) = adenosine 5'-phosphosulfate + [thioredoxin]-dithiol. It participates in sulfur metabolism; hydrogen sulfide biosynthesis; sulfite from sulfate. Its function is as follows. Catalyzes the formation of sulfite from adenosine 5'-phosphosulfate (APS) using thioredoxin as an electron donor. This chain is Adenosine 5'-phosphosulfate reductase, found in Sinorhizobium fredii (strain USDA 257).